Reading from the N-terminus, the 126-residue chain is Probable flagellum biosynthesis repressor protein FlbT (126 aa).

It belongs to the FlbT family.

In terms of biological role, has a post-transcriptional repressor function in flagellum biogenesis. Associates with the 5'-UTR of fljK mRNA and promotes its degradation. The sequence is that of Probable flagellum biosynthesis repressor protein FlbT from Rhodopseudomonas palustris (strain ATCC BAA-98 / CGA009).